The primary structure comprises 317 residues: OVARIAN TUMOR DOMAIN-containing deubiquitinating enzyme 4 (317 aa).

Positions 168 to 306 (YSIIGIPGDG…FGHYDALLLH (139 aa)) constitute an OTU domain. Asp-176 is an active-site residue. The Nucleophile role is filled by Cys-179. Residue His-299 is part of the active site.

This sequence belongs to the peptidase C65 family.

The protein localises to the cytoplasm. The catalysed reaction is Thiol-dependent hydrolysis of ester, thioester, amide, peptide and isopeptide bonds formed by the C-terminal Gly of ubiquitin (a 76-residue protein attached to proteins as an intracellular targeting signal).. In terms of biological role, hydrolase that can remove conjugated ubiquitin from proteins in vitro and may therefore play an important regulatory role at the level of protein turnover by preventing degradation. Cysteine protease with a preference for 'Lys-63' over 'Lys-48'-linked over 'Met-1' ubiquitin (UB) tetramers (e.g. Ub3 and Ub4) as substrates. Also cleaves RUB-GST fusion. The protein is OVARIAN TUMOR DOMAIN-containing deubiquitinating enzyme 4 of Arabidopsis thaliana (Mouse-ear cress).